The sequence spans 131 residues: D-ribose pyranase (131 aa).

The Proton donor role is filled by histidine 20. Residues aspartate 28, histidine 98, and 120 to 122 each bind substrate; that span reads YAN.

The protein belongs to the RbsD / FucU family. RbsD subfamily. As to quaternary structure, homodecamer.

The protein resides in the cytoplasm. The enzyme catalyses beta-D-ribopyranose = beta-D-ribofuranose. It participates in carbohydrate metabolism; D-ribose degradation; D-ribose 5-phosphate from beta-D-ribopyranose: step 1/2. Functionally, catalyzes the interconversion of beta-pyran and beta-furan forms of D-ribose. This Symbiobacterium thermophilum (strain DSM 24528 / JCM 14929 / IAM 14863 / T) protein is D-ribose pyranase.